The primary structure comprises 324 residues: tRNA N6-adenosine threonylcarbamoyltransferase (324 aa).

Fe cation-binding residues include His-107, His-111, and Tyr-128. Substrate contacts are provided by residues 128–132 (YVSGG), Asp-160, Gly-173, Glu-177, and Asn-256. Residue Asp-284 participates in Fe cation binding.

The protein belongs to the KAE1 / TsaD family. Monomer. Component of the KEOPS complex that consists of Kae1, Bud32, Cgi121 and Pcc1; the whole complex dimerizes. Fe(2+) serves as cofactor.

Its subcellular location is the cytoplasm. It carries out the reaction L-threonylcarbamoyladenylate + adenosine(37) in tRNA = N(6)-L-threonylcarbamoyladenosine(37) in tRNA + AMP + H(+). Functionally, required for the formation of a threonylcarbamoyl group on adenosine at position 37 (t(6)A37) in tRNAs that read codons beginning with adenine. Is a component of the KEOPS complex that is probably involved in the transfer of the threonylcarbamoyl moiety of threonylcarbamoyl-AMP (TC-AMP) to the N6 group of A37. Kae1 likely plays a direct catalytic role in this reaction, but requires other protein(s) of the complex to fulfill this activity. The sequence is that of tRNA N6-adenosine threonylcarbamoyltransferase from Methanothrix thermoacetophila (strain DSM 6194 / JCM 14653 / NBRC 101360 / PT) (Methanosaeta thermophila).